Here is a 363-residue protein sequence, read N- to C-terminus: NADH-quinone oxidoreductase subunit H (363 aa).

The next 9 membrane-spanning stretches (helical) occupy residues 62–82 (GPMY…KLLF), 94–114 (AIFV…WAVV), 127–147 (VGLL…ILAG), 166–186 (VVSY…AAGS), 202–222 (FFDW…VSGV), 239–257 (IVAG…LFFL), 264–286 (ILVS…QGWV), 293–313 (LIDW…LFFA), and 339–359 (FIPL…SGVI).

It belongs to the complex I subunit 1 family. NDH-1 is composed of 14 different subunits. Subunits NuoA, H, J, K, L, M, N constitute the membrane sector of the complex.

It localises to the cell inner membrane. The catalysed reaction is a quinone + NADH + 5 H(+)(in) = a quinol + NAD(+) + 4 H(+)(out). In terms of biological role, NDH-1 shuttles electrons from NADH, via FMN and iron-sulfur (Fe-S) centers, to quinones in the respiratory chain. The immediate electron acceptor for the enzyme in this species is believed to be ubiquinone. Couples the redox reaction to proton translocation (for every two electrons transferred, four hydrogen ions are translocated across the cytoplasmic membrane), and thus conserves the redox energy in a proton gradient. This subunit may bind ubiquinone. The sequence is that of NADH-quinone oxidoreductase subunit H from Xylella fastidiosa (strain 9a5c).